The sequence spans 869 residues: MQKLGLSGLRGLEGFRSLAGSTSTAAKAPNPKPSSDIGGSTYGSFANLKITAEKLVKEQASVKTDLEMTHTKLRRATEQINLLEAKLQQAVNENAKLKVKQTEDSKLWQGLDSKVSSTKTLCNQLTETLQQLASQTERAEEDKKFFEEILGKNSKAFEEFNCLLHDSSIKLECAEQMIISGKQEMLRIKQEKEEMDQSYKEQLYASDTTIREKNSLIKQLEDSIEQNKARLLYVDSRLECMEQELKLKEDVCICLKENLASTESEKNDLKLRNEGYTLEVQKLSKDNKELNELLSGFTVKVTELDKEHTSISSHVTQLISSFERYDGKVHEEKMLMIKSAKDKFEHLQNQYVNLISENNALQTEIEELKSRIIELQKTQEIVMVQHVEECQVAEDKIRRLESEAEISASNISQLEKVASDLEGRVQKLLEDSRSAENHKQELLQKILKLESDNQELLGRVQSVLNEKSNDTESLQGEIAKRDQQVETLENQVNQLCSIIDEKEQLHTCAVEREKNLEEQKLQVQASLAATESQLTEAKKQYDIMLEGKKIELSKHLKELSLKNDQAINEIRRKYELEKVEIINIEKEKAEKLIKEMENKCNEKISENRQDSERYLMCLKEEHGSMVARIQQDNEHKESTLRAYHKEELQRIQSQAENELRERLSSLRKDHEIQMKSLTKKHEENCQKLQDELELQKSKEEKQRALLQLQWKVMGETQQVDQEVNSKKEYSVSSIKRRDPYIRKEHQLQLVSPETKRKDVNLSGIIQSPITNMLRKVEKGTQDIPKHRKVTHHEYEVETANGRITKRRKTKSTVMFGEPNTQKSLHDTADKDPTKMKKVVAGSHPHPANIGELFSEGSLNPYAEDPYAFG.

3 coiled-coil regions span residues 64 to 298 (TDLE…SGFT), 330 to 614 (HEEK…SERY), and 641 to 713 (RAYH…WKVM). Residues 841 to 869 (GSHPHPANIGELFSEGSLNPYAEDPYAFG) are disordered.

Interacts with CRC1. In terms of tissue distribution, highly expressed in panicles.

It localises to the nucleus. It is found in the chromosome. Its function is as follows. Required for chromosome synapsis and regulates crossover frequency during meiosis. Acts as a transverse filament protein and constitutes the central element of the synaptonemal complex. In Oryza sativa subsp. japonica (Rice), this protein is Synaptonemal complex protein ZEP1 (ZEP1).